The sequence spans 306 residues: Aspartate carbamoyltransferase catalytic subunit (306 aa).

Residues Arg-54 and Thr-55 each coordinate carbamoyl phosphate. Lys-83 is an L-aspartate binding site. Positions 104, 132, and 135 each coordinate carbamoyl phosphate. The L-aspartate site is built by Arg-165 and Arg-227. Residues Leu-266 and Pro-267 each coordinate carbamoyl phosphate.

Belongs to the aspartate/ornithine carbamoyltransferase superfamily. ATCase family. Heterododecamer (2C3:3R2) of six catalytic PyrB chains organized as two trimers (C3), and six regulatory PyrI chains organized as three dimers (R2).

It catalyses the reaction carbamoyl phosphate + L-aspartate = N-carbamoyl-L-aspartate + phosphate + H(+). Its pathway is pyrimidine metabolism; UMP biosynthesis via de novo pathway; (S)-dihydroorotate from bicarbonate: step 2/3. Functionally, catalyzes the condensation of carbamoyl phosphate and aspartate to form carbamoyl aspartate and inorganic phosphate, the committed step in the de novo pyrimidine nucleotide biosynthesis pathway. In Finegoldia magna (strain ATCC 29328 / DSM 20472 / WAL 2508) (Peptostreptococcus magnus), this protein is Aspartate carbamoyltransferase catalytic subunit.